A 159-amino-acid polypeptide reads, in one-letter code: SsrA-binding protein (159 aa).

The protein belongs to the SmpB family.

Its subcellular location is the cytoplasm. Required for rescue of stalled ribosomes mediated by trans-translation. Binds to transfer-messenger RNA (tmRNA), required for stable association of tmRNA with ribosomes. tmRNA and SmpB together mimic tRNA shape, replacing the anticodon stem-loop with SmpB. tmRNA is encoded by the ssrA gene; the 2 termini fold to resemble tRNA(Ala) and it encodes a 'tag peptide', a short internal open reading frame. During trans-translation Ala-aminoacylated tmRNA acts like a tRNA, entering the A-site of stalled ribosomes, displacing the stalled mRNA. The ribosome then switches to translate the ORF on the tmRNA; the nascent peptide is terminated with the 'tag peptide' encoded by the tmRNA and targeted for degradation. The ribosome is freed to recommence translation, which seems to be the essential function of trans-translation. In Mycobacteroides abscessus (strain ATCC 19977 / DSM 44196 / CCUG 20993 / CIP 104536 / JCM 13569 / NCTC 13031 / TMC 1543 / L948) (Mycobacterium abscessus), this protein is SsrA-binding protein.